The chain runs to 279 residues: Phosphonates import ATP-binding protein PhnC (279 aa).

Residues 2–245 (FQLKNVTRQF…AVAAIYGAET (244 aa)) enclose the ABC transporter domain. Residue 34 to 41 (GRSGAGKS) participates in ATP binding.

The protein belongs to the ABC transporter superfamily. Phosphonates importer (TC 3.A.1.9.1) family. In terms of assembly, the complex is composed of two ATP-binding proteins (PhnC), two transmembrane proteins (PhnE) and a solute-binding protein (PhnD).

Its subcellular location is the cell inner membrane. It catalyses the reaction phosphonate(out) + ATP + H2O = phosphonate(in) + ADP + phosphate + H(+). Functionally, part of the ABC transporter complex PhnCDE involved in phosphonates import. Responsible for energy coupling to the transport system. The polypeptide is Phosphonates import ATP-binding protein PhnC (Rhizobium meliloti (strain 1021) (Ensifer meliloti)).